The following is a 339-amino-acid chain: MDQLATQIDGKPASIPAVETSSSLEEAKIIYNLPFNDLLFRAQQVHRCHFDANAIQMSRLLSIKTGGCPEDCSYCSQSARNPTGLKASKLMEVERVLAEARKAKEGGATRYCMGAAWRNPKERDMEAVVAMVEGVKALDMETCMTLGMLTPEQSERLADAGLDYYNHNVDTSERFYSEIITTRTFEDRLETLANVRDAGIKVCAGGILGMGETVEDRISMLVTLANLPVPPESVPINMLIPIPGSKLANADPVDPIDFVRTIALARILMPRSHVRLSAGRTEMSDETQALCFLAGANSIFIGETLLTADNPGEDHDTALFRRLGLKPMELQSSEAGGCR.

The region spanning 53-271 (NAIQMSRLLS…IALARILMPR (219 aa)) is the Radical SAM core domain. [4Fe-4S] cluster contacts are provided by Cys-68, Cys-72, and Cys-75. Residues Cys-112, Cys-143, Cys-203, and Arg-275 each coordinate [2Fe-2S] cluster.

Belongs to the radical SAM superfamily. Biotin synthase family. Homodimer. Requires [4Fe-4S] cluster as cofactor. The cofactor is [2Fe-2S] cluster.

The catalysed reaction is (4R,5S)-dethiobiotin + (sulfur carrier)-SH + 2 reduced [2Fe-2S]-[ferredoxin] + 2 S-adenosyl-L-methionine = (sulfur carrier)-H + biotin + 2 5'-deoxyadenosine + 2 L-methionine + 2 oxidized [2Fe-2S]-[ferredoxin]. It participates in cofactor biosynthesis; biotin biosynthesis; biotin from 7,8-diaminononanoate: step 2/2. In terms of biological role, catalyzes the conversion of dethiobiotin (DTB) to biotin by the insertion of a sulfur atom into dethiobiotin via a radical-based mechanism. In Agrobacterium fabrum (strain C58 / ATCC 33970) (Agrobacterium tumefaciens (strain C58)), this protein is Biotin synthase.